A 239-amino-acid chain; its full sequence is Orotidine 5'-phosphate decarboxylase (239 aa).

Residues Asp-15, Lys-37, 64–73, Thr-126, Arg-187, Gln-196, Gly-216, and Arg-217 each bind substrate; that span reads DLKFHDIPNT. The active-site Proton donor is the Lys-66.

Belongs to the OMP decarboxylase family. Type 1 subfamily. In terms of assembly, homodimer.

It catalyses the reaction orotidine 5'-phosphate + H(+) = UMP + CO2. The protein operates within pyrimidine metabolism; UMP biosynthesis via de novo pathway; UMP from orotate: step 2/2. Catalyzes the decarboxylation of orotidine 5'-monophosphate (OMP) to uridine 5'-monophosphate (UMP). This chain is Orotidine 5'-phosphate decarboxylase, found in Geobacter metallireducens (strain ATCC 53774 / DSM 7210 / GS-15).